A 103-amino-acid polypeptide reads, in one-letter code: Large ribosomal subunit protein uL24 (103 aa).

This sequence belongs to the universal ribosomal protein uL24 family. As to quaternary structure, part of the 50S ribosomal subunit.

In terms of biological role, one of two assembly initiator proteins, it binds directly to the 5'-end of the 23S rRNA, where it nucleates assembly of the 50S subunit. One of the proteins that surrounds the polypeptide exit tunnel on the outside of the subunit. In Ruegeria pomeroyi (strain ATCC 700808 / DSM 15171 / DSS-3) (Silicibacter pomeroyi), this protein is Large ribosomal subunit protein uL24.